Consider the following 175-residue polypeptide: MADRKEQKRVNAEKRQENWVDRLVSVNRVSKVVKGGRRFSFNTVVVVGNEDGLVGTGLGKANEVSSAISKGADDAKKNVIRVPMRDGTIPHKVVGKQDAGKVLLKPASPGTGVIAGGGVRAVLECAGYRNVLTKSLGTSNPHNQVKATINALAETEDALEVARRRDIPLEKVFNG.

In terms of domain architecture, S5 DRBM spans 19-82 (WVDRLVSVNR…DDAKKNVIRV (64 aa)).

The protein belongs to the universal ribosomal protein uS5 family. As to quaternary structure, part of the 30S ribosomal subunit. Contacts proteins S4 and S8.

With S4 and S12 plays an important role in translational accuracy. Functionally, located at the back of the 30S subunit body where it stabilizes the conformation of the head with respect to the body. The sequence is that of Small ribosomal subunit protein uS5 from Salinibacter ruber (strain DSM 13855 / M31).